The primary structure comprises 253 residues: Ribosomal RNA small subunit methyltransferase G (253 aa).

S-adenosyl-L-methionine contacts are provided by residues glycine 84, leucine 89, isoleucine 136–glutamate 137, and arginine 155.

This sequence belongs to the methyltransferase superfamily. RNA methyltransferase RsmG family.

The protein resides in the cytoplasm. In terms of biological role, specifically methylates the N7 position of a guanine in 16S rRNA. The sequence is that of Ribosomal RNA small subunit methyltransferase G from Prochlorococcus marinus (strain SARG / CCMP1375 / SS120).